The following is a 471-amino-acid chain: Siroheme synthase (471 aa).

Positions 1-203 (MEYLPLFADL…GRLEQAEQAL (203 aa)) are precorrin-2 dehydrogenase /sirohydrochlorin ferrochelatase. Residues 22–23 (EV) and 43–44 (RA) each bind NAD(+). A Phosphoserine modification is found at Ser128. The tract at residues 215-471 (GEVALVGAGP…QKRASVVNLA (257 aa)) is uroporphyrinogen-III C-methyltransferase. Pro224 is a binding site for S-adenosyl-L-methionine. Catalysis depends on Asp247, which acts as the Proton acceptor. Lys269 functions as the Proton donor in the catalytic mechanism. S-adenosyl-L-methionine contacts are provided by residues 300–302 (GGD), Ile305, 330–331 (TA), Met382, and Gly411.

It in the N-terminal section; belongs to the precorrin-2 dehydrogenase / sirohydrochlorin ferrochelatase family. In the C-terminal section; belongs to the precorrin methyltransferase family.

It catalyses the reaction uroporphyrinogen III + 2 S-adenosyl-L-methionine = precorrin-2 + 2 S-adenosyl-L-homocysteine + H(+). The catalysed reaction is precorrin-2 + NAD(+) = sirohydrochlorin + NADH + 2 H(+). The enzyme catalyses siroheme + 2 H(+) = sirohydrochlorin + Fe(2+). Its pathway is cofactor biosynthesis; adenosylcobalamin biosynthesis; precorrin-2 from uroporphyrinogen III: step 1/1. The protein operates within cofactor biosynthesis; adenosylcobalamin biosynthesis; sirohydrochlorin from precorrin-2: step 1/1. It participates in porphyrin-containing compound metabolism; siroheme biosynthesis; precorrin-2 from uroporphyrinogen III: step 1/1. It functions in the pathway porphyrin-containing compound metabolism; siroheme biosynthesis; siroheme from sirohydrochlorin: step 1/1. Its pathway is porphyrin-containing compound metabolism; siroheme biosynthesis; sirohydrochlorin from precorrin-2: step 1/1. Multifunctional enzyme that catalyzes the SAM-dependent methylations of uroporphyrinogen III at position C-2 and C-7 to form precorrin-2 via precorrin-1. Then it catalyzes the NAD-dependent ring dehydrogenation of precorrin-2 to yield sirohydrochlorin. Finally, it catalyzes the ferrochelation of sirohydrochlorin to yield siroheme. The chain is Siroheme synthase from Sodalis glossinidius (strain morsitans).